We begin with the raw amino-acid sequence, 836 residues long: General negative regulator of transcription subunit 3 (836 aa).

3 coiled-coil regions span residues 36-68, 119-195, and 255-292; these read NNPS…WQSS, RERR…ANEE, and NTSD…AKNA. Over residues 252–267 the composition is skewed to polar residues; the sequence is EDNNTSDANESLQDIS. Disordered regions lie at residues 252–284, 296–391, 410–471, and 513–532; these read EDNN…AKKA, AIPV…LKPA, AVEK…NTGA, and NPKS…PENT. Positions 268-283 are enriched in basic and acidic residues; it reads KLSKKEQRKLEREAKK. Residues serine 303, serine 307, and serine 322 each carry the phosphoserine modification. The span at 341–386 shows a compositional bias: polar residues; the sequence is SIKSPRSSADNLLPSLQKSPSSATPETPTNVHTHIHQTPNGITGAT. Over residues 418–446 the composition is skewed to low complexity; it reads TSASSTISNTSTKTPTTAAATTTSSNANS. Residues serine 446 and serine 450 each carry the phosphoserine modification. Polar residues-rich tracts occupy residues 447 to 468 and 522 to 531; these read RIGS…QPDN and TTVNQNGPEN. Lysine 535 is covalently cross-linked (Glycyl lysine isopeptide (Lys-Gly) (interchain with G-Cter in ubiquitin)). The interval 537–583 is disordered; it reads MEQKEEESPEERNKLQVPTFGVFDDDFESDRDSETEPEEEEQPSTPK. The segment covering 559–578 has biased composition (acidic residues); it reads FDDDFESDRDSETEPEEEEQ. Residues serine 565 and serine 569 each carry the phosphoserine modification. The residue at position 571 (threonine 571) is a Phosphothreonine. Serine 657 carries the phosphoserine modification. Residues 803-831 adopt a coiled-coil conformation; it reads NVNDQSNVTLEQQKQEISHGKQLLKQLKQ.

The protein belongs to the CNOT2/3/5 family. Forms a NOT protein complex that comprises NOT1, NOT2, NOT3, NOT4 and NOT5. Subunit of the 1.0 MDa CCR4-NOT core complex that contains CCR4, CAF1, NOT1, NOT2, NOT3, NOT4, NOT5, CAF40 and CAF130. The core complex probably is part of a less characterized 1.9 MDa CCR4-NOT complex.

Its subcellular location is the cytoplasm. The protein resides in the nucleus. Acts as a component of the CCR4-NOT core complex, which in the nucleus seems to be a general transcription factor, and in the cytoplasm the major mRNA deadenylase involved in mRNA turnover. The NOT protein subcomplex negatively regulates the basal and activated transcription of many genes. Preferentially affects TC-type TATA element-dependent transcription. Could directly or indirectly inhibit component(s) of the general transcription machinery. This chain is General negative regulator of transcription subunit 3 (NOT3), found in Saccharomyces cerevisiae (strain ATCC 204508 / S288c) (Baker's yeast).